Consider the following 571-residue polypeptide: Gag-Pro polyprotein (571 aa).

Glycine 2 carries the N-myristoyl glycine; by host lipid modification. Positions 100–103 (PPPY) match the PPXY motif motif. Repeats lie at residues 342-362 (PPGP…CPTK) and 367-387 (PPGP…CPTL). CCHC-type zinc fingers lie at residues 345–362 (PCYR…CPTK) and 370–387 (PCPI…CPTL). The Protease; shared with dimeric partner role is filled by threonine 453.

As to quaternary structure, homodimer; the homodimers are part of the immature particles. Interacts with human TSG101 and NEDD4; these interactions are essential for budding and release of viral particles. In terms of assembly, homodimer; further assembles as homohexamers. In terms of processing, specific enzymatic cleavages by the viral protease yield mature proteins. The polyprotein is cleaved during and after budding, this process is termed maturation. The protease is autoproteolytically processed at its N- and C-termini. Myristoylated. Myristoylation of the matrix (MA) domain mediates the transport and binding of Gag polyproteins to the host plasma membrane and is required for the assembly of viral particles.

The protein resides in the virion. The matrix domain targets Gag, Gag-Pro and Gag-Pro-Pol polyproteins to the plasma membrane via a multipartite membrane binding signal, that includes its myristoylated N-terminus. Functionally, matrix protein. In terms of biological role, forms the spherical core of the virus that encapsulates the genomic RNA-nucleocapsid complex. Its function is as follows. Binds strongly to viral nucleic acids and promote their aggregation. Also destabilizes the nucleic acids duplexes via highly structured zinc-binding motifs. The aspartyl protease mediates proteolytic cleavages of Gag and Gag-Pol polyproteins during or shortly after the release of the virion from the plasma membrane. Cleavages take place as an ordered, step-wise cascade to yield mature proteins. This process is called maturation. Displays maximal activity during the budding process just prior to particle release from the cell. This is Gag-Pro polyprotein from Bovine leukemia virus (isolate Japanese BLV-1) (BLV).